A 155-amino-acid chain; its full sequence is Histone H2B.4 (155 aa).

Basic and acidic residues predominate over residues 1-28 (MAPKTKEEKPASEAVEPKAEAKPKAEKA). Residues 1-62 (MAPKTKEEKP…GDKKKKKAKV (62 aa)) are disordered. Residues 29–40 (PKKKEKKAPAKK) are compositionally biased toward basic residues. Lys-151 participates in a covalent cross-link: Glycyl lysine isopeptide (Lys-Gly) (interchain with G-Cter in ubiquitin).

It belongs to the histone H2B family. As to quaternary structure, the nucleosome is a histone octamer containing two molecules each of H2A, H2B, H3 and H4 assembled in one H3-H4 heterotetramer and two H2A-H2B heterodimers. The octamer wraps approximately 147 bp of DNA. In terms of processing, monoubiquitinated to form H2BK143ub1; may give a specific tag for epigenetic transcriptional activation.

The protein resides in the nucleus. It is found in the chromosome. Functionally, core component of nucleosome. Nucleosomes wrap and compact DNA into chromatin, limiting DNA accessibility to the cellular machineries which require DNA as a template. Histones thereby play a central role in transcription regulation, DNA repair, DNA replication and chromosomal stability. DNA accessibility is regulated via a complex set of post-translational modifications of histones, also called histone code, and nucleosome remodeling. The polypeptide is Histone H2B.4 (Volvox carteri (Green alga)).